The following is a 540-amino-acid chain: MLO protein homolog 1 (540 aa).

Residues 1-16 (MAGGRSGSRELPETPT) lie on the Extracellular side of the membrane. A helical membrane pass occupies residues 17-37 (WAVAVVCAVLVLVSVAMEHGL). At 38-60 (HNLSHWFRRRQKKAMGDALDKIK) the chain is on the cytoplasmic side. A helical transmembrane segment spans residues 61–81 (AELMLLGFISLLLTVAQAPIS). The Extracellular segment spans residues 82 to 142 (KICIPKSAAN…MSAKSMHQLH (61 aa)). A helical transmembrane segment spans residues 143 to 163 (IFIFVLAVFHVTYCVITMGLG). The Cytoplasmic portion of the chain corresponds to 164–265 (RLKMKKWKKW…IKRSLEDDFK (102 aa)). The helical transmembrane segment at 266 to 286 (VVVGISLPLWFVGILVLFLDI) threads the bilayer. A topological domain (extracellular) is located at residue His287. Residues 288–308 (GLGTLIWISFVPLIIVLLVGT) traverse the membrane as a helical segment. Residues 309–347 (KLEMVIMQMAQEIQDRATVIQGAPVVEPSNKYFWFNRPD) lie on the Cytoplasmic side of the membrane. A helical membrane pass occupies residues 348–368 (WVLFFIHLTLFHNAFQMAHFV). Topologically, residues 369–383 (WTMATPGLKKCFHEN) are extracellular. Residues 384–404 (IWLSIVEVIVGISLQVLCSYI) form a helical membrane-spanning segment. The Cytoplasmic segment spans residues 405–540 (TFPLYALVTQ…DSDFSFSAQR (136 aa)). A calmodulin-binding region spans residues 426 to 447 (EQTMKALMNWRKKAMEKKKVRD). Residues 468–526 (ASPVHLLQDHRARSDDPPSPITVASPPAPEEDIYPVPAAAASRQLLDDPPDRRWMASSS) form a disordered region. Composition is skewed to basic and acidic residues over residues 474–483 (LQDHRARSDD) and 512–521 (LLDDPPDRRW).

It belongs to the MLO family.

The protein resides in the membrane. May be involved in modulation of pathogen defense and leaf cell death. Activity seems to be regulated by Ca(2+)-dependent calmodulin binding and seems not to require heterotrimeric G proteins. The protein is MLO protein homolog 1 (MLO1) of Oryza sativa subsp. japonica (Rice).